We begin with the raw amino-acid sequence, 709 residues long: MIYNYPMKYRRQFRRLPKHLQGIYYAFLSISTMIKIALDPYSKRPMKWMHSGTPFQYENERMVMIKLSLATVGLLFATRLSGLQFNKYTELKSVAERQQIGQVNDPQQRKIILDHHGDIVAIDLPAYDLYVHPRMCSISLERIAELLSPILDLSSQYLYNRLDEGDSGICLMHQIDTNTSAQIRRLGVDGIELVHHPQRVYPKRGSFESILGYVDTEGYGQAGLESSLDDWMKSTYQDVPCWMDGHGNFLGIRFPKQILFHQESALQLTIDCGLQEKVSQLITNAMNRFGAKRIAAIIMEAHSGAIRCLATSPSYDPNCYGWFPMERFRCWPITDLFEPGSTFKPVNLAIALENGIFQPTDRILDTGKIRIGDSWIGNVGGGFIWDRSLDHLTGTQILQRSSNVGMVRVMQSLDPAIYHRNLIRLGLGSHRNDNQTSFKMSSHDHNESGWNLKDLTSDYAISVVKDQDEFVDHEIEAATASFGQGLAMTPLKLLQLIATIANGGMAVTPHLISKIVTLDHFHHLQSMNEFSLQGWVGQSVLSRSQYHAKQPRPYTHDLYLGHVPVPSLELGWFDVKSIPPHTRERRRLFSRQTCNVLLGMLEQVVLDAQATGSRGFLPGYAMAGKTGTAQKASALGGYSTDSVVTSFVGIYPAVKPKFVTLVIIDEPEDPFRFGFNTAVDVTQTLISEMIVQEQDPPSYPTVSLFERNM.

A helical membrane pass occupies residues Leu-20–Ser-42. The active-site Acyl-ester intermediate is the Ser-341.

It belongs to the transpeptidase family.

The protein localises to the plastid. Its subcellular location is the chloroplast membrane. The enzyme catalyses Preferential cleavage: (Ac)2-L-Lys-D-Ala-|-D-Ala. Also transpeptidation of peptidyl-alanyl moieties that are N-acyl substituents of D-alanine.. This Nephroselmis olivacea (Green alga) protein is Peptidoglycan D,D-transpeptidase FtsI homolog (ftsI).